A 274-amino-acid polypeptide reads, in one-letter code: Formamidopyrimidine-DNA glycosylase (274 aa).

Proline 2 acts as the Schiff-base intermediate with DNA in catalysis. The active-site Proton donor is glutamate 3. The active-site Proton donor; for beta-elimination activity is lysine 60. Residues histidine 93 and arginine 112 each contribute to the DNA site. Residues 240-274 form an FPG-type zinc finger; the sequence is FVYGRKGEPCKRCGTPIEKTVVAGRGTHYCPRCQR. Arginine 264 acts as the Proton donor; for delta-elimination activity in catalysis.

The protein belongs to the FPG family. In terms of assembly, monomer. The cofactor is Zn(2+).

The catalysed reaction is Hydrolysis of DNA containing ring-opened 7-methylguanine residues, releasing 2,6-diamino-4-hydroxy-5-(N-methyl)formamidopyrimidine.. It carries out the reaction 2'-deoxyribonucleotide-(2'-deoxyribose 5'-phosphate)-2'-deoxyribonucleotide-DNA = a 3'-end 2'-deoxyribonucleotide-(2,3-dehydro-2,3-deoxyribose 5'-phosphate)-DNA + a 5'-end 5'-phospho-2'-deoxyribonucleoside-DNA + H(+). Involved in base excision repair of DNA damaged by oxidation or by mutagenic agents. Acts as a DNA glycosylase that recognizes and removes damaged bases. Has a preference for oxidized purines, such as 7,8-dihydro-8-oxoguanine (8-oxoG). Has AP (apurinic/apyrimidinic) lyase activity and introduces nicks in the DNA strand. Cleaves the DNA backbone by beta-delta elimination to generate a single-strand break at the site of the removed base with both 3'- and 5'-phosphates. This chain is Formamidopyrimidine-DNA glycosylase, found in Geobacillus kaustophilus (strain HTA426).